Reading from the N-terminus, the 435-residue chain is Serine--tRNA ligase (435 aa).

233–235 (TAE) is a binding site for L-serine. Residue 264-266 (RAE) participates in ATP binding. E287 is a binding site for L-serine. 351–354 (EISS) serves as a coordination point for ATP. An L-serine-binding site is contributed by S386.

Belongs to the class-II aminoacyl-tRNA synthetase family. Type-1 seryl-tRNA synthetase subfamily. Homodimer. The tRNA molecule binds across the dimer.

Its subcellular location is the cytoplasm. It catalyses the reaction tRNA(Ser) + L-serine + ATP = L-seryl-tRNA(Ser) + AMP + diphosphate + H(+). It carries out the reaction tRNA(Sec) + L-serine + ATP = L-seryl-tRNA(Sec) + AMP + diphosphate + H(+). The protein operates within aminoacyl-tRNA biosynthesis; selenocysteinyl-tRNA(Sec) biosynthesis; L-seryl-tRNA(Sec) from L-serine and tRNA(Sec): step 1/1. In terms of biological role, catalyzes the attachment of serine to tRNA(Ser). Is also able to aminoacylate tRNA(Sec) with serine, to form the misacylated tRNA L-seryl-tRNA(Sec), which will be further converted into selenocysteinyl-tRNA(Sec). This chain is Serine--tRNA ligase, found in Anaeromyxobacter sp. (strain K).